Here is a 270-residue protein sequence, read N- to C-terminus: Transcription factor PU.1 (270 aa).

The segment at Leu124 to Gly162 is disordered. A phosphoserine mark is found at Ser140 and Ser146. Residues Leu153–Gly162 show a composition bias toward low complexity. Positions Ile170–Ser253 form a DNA-binding region, ETS. Positions 217, 230, 233, and 243 each coordinate DNA.

It belongs to the ETS family. As to quaternary structure, binds DNA as a monomer. Can form homomers. Directly interacts with CEBPD/NF-IL6-beta; this interaction does not affect DNA-binding properties of each partner. Interacts with NONO/p54(nrb). Interacts with RUNX1/AML1. Interacts with GFI1; the interaction represses SPI1 transcriptional activity, hence blocks SPI1-induced macrophage differentiation of myeloid progenitor cells. Interacts with CEBPE. Interacts with IRF4/Pip and IRF8. Interacts with JUN. Interacts with RB1. Interacts with TBP.

It is found in the nucleus. Its activity is regulated as follows. Transcriptional activity at macrophage-specific genes is inhibited by interaction with GFI1, which results in the inhibition of SPI1-induced macrophage differentiation of myeloid progenitor cells, but not that of the granulocyte lineage. Pioneer transcription factor, which controls hematopoietic cell fate by decompacting stem cell heterochromatin and allowing other transcription factors to enter otherwise inaccessible genomic sites. Once in open chromatin, can directly control gene expression by binding genetic regulatory elements and can also more broadly influence transcription by recruiting transcription factors, such as interferon regulatory factors (IRFs), to otherwise inaccessible genomic regions. Transcriptionally activates genes important for myeloid and lymphoid lineages, such as CSF1R. Transcriptional activation from certain promoters, possibly containing low affinity binding sites, is achieved cooperatively with other transcription factors. FCER1A transactivation is achieved in cooperation with GATA1. May be particularly important for the pro- to pre-B cell transition. Binds (via the ETS domain) onto the purine-rich DNA core sequence 5'-GAGGAA-3', also known as the PU-box. In vitro can bind RNA and interfere with pre-mRNA splicing. In Sus scrofa (Pig), this protein is Transcription factor PU.1 (SPI1).